The primary structure comprises 2340 residues: Proto-oncogene tyrosine-protein kinase ROS (2340 aa).

A signal peptide spans 1–28 (MKNICWLTLKLVKFVVLGCIIWISVAQS). The Extracellular portion of the chain corresponds to 29–1854 (TVLSSCLTSC…EDGVWITETS (1826 aa)). Asn-53 carries an N-linked (GlcNAc...) asparagine glycan. Fibronectin type-III domains are found at residues 111 to 206 (LPTA…VPET) and 207 to 295 (APLI…PSPS). N-linked (GlcNAc...) asparagine glycosylation is found at Asn-334 and Asn-362. In terms of domain architecture, Fibronectin type-III 3 spans 567-667 (LPGHPQEVSV…APSVGTTLVP (101 aa)). 2 N-linked (GlcNAc...) asparagine glycosylation sites follow: Asn-935 and Asn-1011. Fibronectin type-III domains lie at 943–1038 (IPDP…SVPS) and 1039–1146 (APEN…TSEI). An N-linked (GlcNAc...) asparagine glycan is attached at Asn-1243. Fibronectin type-III domains are found at residues 1442 to 1549 (ASDM…TKSG), 1550 to 1649 (VPGA…VNMF), 1651 to 1744 (TPEK…TKAG), and 1745 to 1846 (VPSK…LVED). An N-linked (GlcNAc...) asparagine glycan is attached at Asn-1676. Residues 1855–1875 (FILTIIVGIFLVATVPLTFVW) form a helical membrane-spanning segment. Residues 1876-2340 (HRSLKSHKAS…AHSEHGDVSE (465 aa)) lie on the Cytoplasmic side of the membrane. Residues 1938–2216 (LSLRLLLGSG…QLQLFRNVFL (279 aa)) enclose the Protein kinase domain. ATP is bound by residues 1944-1952 (LGSGAFGEV) and Lys-1973. Asp-2072 functions as the Proton acceptor in the catalytic mechanism. 2 positions are modified to phosphotyrosine; by autocatalysis: Tyr-2267 and Tyr-2327.

It belongs to the protein kinase superfamily. Tyr protein kinase family. Insulin receptor subfamily. Interacts with PTPN11; may activate the PI3 kinase-mTOR signaling pathway. Interacts with VAV3; constitutive interaction mediating VAV3 phosphorylation. Interacts with PTPN6 (via SH2 1 domain); the interaction is direct and promotes ROS1 dephosphorylation. Post-translationally, phosphorylated. Probably autophosphorylates. Phosphorylation at Tyr-2267 and/or Tyr-2327 recruits PTPN11. Phosphorylation at Tyr-2267 is required for the interaction with PTPN6 that mediates ROS1 dephosphorylation. Phosphorylation at Tyr-2267 stimulates the kinase activity and the activation of the ERK1 signaling cascade. Expressed by epithelial cells of the caput epididymis (at protein level).

It is found in the cell membrane. The enzyme catalyses L-tyrosyl-[protein] + ATP = O-phospho-L-tyrosyl-[protein] + ADP + H(+). Inhibited by dephosphorylation by PTPN6. In terms of biological role, receptor tyrosine kinase (RTK) that plays a role in epithelial cell differentiation and regionalization of the proximal epididymal epithelium. NELL2 is an endogenous ligand for ROS1. Upon endogenous stimulation by NELL2, ROS1 activates the intracellular signaling pathway and triggers epididymal epithelial differentiation and subsequent sperm maturation. May activate several downstream signaling pathways related to cell differentiation, proliferation, growth and survival including the PI3 kinase-mTOR signaling pathway. Mediates the phosphorylation of PTPN11, an activator of this pathway. May also phosphorylate and activate the transcription factor STAT3 to control anchorage-independent cell growth. Mediates the phosphorylation and the activation of VAV3, a guanine nucleotide exchange factor regulating cell morphology. May activate other downstream signaling proteins including AKT1, MAPK1, MAPK3, IRS1, and PLCG2. The sequence is that of Proto-oncogene tyrosine-protein kinase ROS (Ros1) from Mus musculus (Mouse).